We begin with the raw amino-acid sequence, 197 residues long: ATP-dependent Clp protease proteolytic subunit 1 (197 aa).

Catalysis depends on S96, which acts as the Nucleophile. H121 is a catalytic residue.

Belongs to the peptidase S14 family. In terms of assembly, fourteen ClpP subunits assemble into 2 heptameric rings which stack back to back to give a disk-like structure with a central cavity, resembling the structure of eukaryotic proteasomes.

It localises to the cytoplasm. The enzyme catalyses Hydrolysis of proteins to small peptides in the presence of ATP and magnesium. alpha-casein is the usual test substrate. In the absence of ATP, only oligopeptides shorter than five residues are hydrolyzed (such as succinyl-Leu-Tyr-|-NHMec, and Leu-Tyr-Leu-|-Tyr-Trp, in which cleavage of the -Tyr-|-Leu- and -Tyr-|-Trp bonds also occurs).. In terms of biological role, cleaves peptides in various proteins in a process that requires ATP hydrolysis. Has a chymotrypsin-like activity. Plays a major role in the degradation of misfolded proteins. This Synechococcus sp. (strain ATCC 27144 / PCC 6301 / SAUG 1402/1) (Anacystis nidulans) protein is ATP-dependent Clp protease proteolytic subunit 1.